A 106-amino-acid polypeptide reads, in one-letter code: MLSHSQKVVRLYRKAIKSIRDYSEDYDMFLLNAGDLRASLKAGKNETNPFAIQQMVKQLEDFNSYWEHPDPYIPCDGINGTKWQRNTAPAKYAVDPTNHLLENGRE.

This sequence belongs to the complex I LYR family. As to quaternary structure, complex I is composed of about 45 different subunits.

It is found in the mitochondrion inner membrane. Its function is as follows. Accessory subunit of the mitochondrial membrane respiratory chain NADH dehydrogenase (Complex I), that is believed to be not involved in catalysis. Complex I functions in the transfer of electrons from NADH to the respiratory chain. The immediate electron acceptor for the enzyme is believed to be ubiquinone. This is NADH dehydrogenase [ubiquinone] 1 beta subcomplex subunit 9 (ndufb9) from Dictyostelium discoideum (Social amoeba).